A 1219-amino-acid chain; its full sequence is Polyamine-transporting ATPase 13A3 (1219 aa).

Residues 1-28 (MDKEERKTINKGQEDEMEIHGYNLCRWK) lie on the Cytoplasmic side of the membrane. Residues 29–49 (LAMVFVGVICTGGFLLLLLYW) lie within the membrane without spanning it. The Cytoplasmic segment spans residues 50–201 (LPEWRVKATC…IAVKVPSVFK (152 aa)). The helical transmembrane segment at 202 to 222 (LLIKEVLNPFYIFQLFSVILW) threads the bilayer. Residues 223 to 228 (SVDEYY) lie on the Lumenal side of the membrane. The helical transmembrane segment at 229–249 (YYALAIVIMSVVSIISSLYSI) threads the bilayer. Over 250 to 405 (RKQYVMLHDM…KPTDFKLYRD (156 aa)) the chain is Cytoplasmic. The helical transmembrane segment at 406–426 (AYLFLLCLVVVAGIGFIYTII) threads the bilayer. Topologically, residues 427-444 (NSILNEKEVQEIIIKSLD) are lumenal. A helical transmembrane segment spans residues 445-465 (IITITVPPALPAAMTAGIVYA). Residues 466-936 (QRRLKKVGIF…ALMTSFCVFK (471 aa)) are Cytoplasmic-facing. Catalysis depends on D494, which acts as the 4-aspartylphosphate intermediate. Residues D494 and T496 each contribute to the Mg(2+) site. ATP contacts are provided by residues 494-496 (DKT), F624, R680, and D746. S813 carries the phosphoserine modification. Mg(2+)-binding residues include D879 and D883. 879–883 (DGAND) provides a ligand contact to ATP. A helical membrane pass occupies residues 937 to 957 (FMALYSIIQYFSVTLLYSILS). Residue N958 is a topological domain, lumenal. The chain crosses the membrane as a helical span at residues 959 to 979 (LGDFQFLFIDLAIILVVVFTM). Over 980–995 (SLNPAWKELVAQRPPS) the chain is Cytoplasmic. Residues 996–1016 (GLISGALLFSVLSQIVISVGF) form a helical membrane-spanning segment. Topologically, residues 1017 to 1066 (QSLGFFWVKQYKVCDPNSDVCNTTRSACWNSSHLYNGTELDSCKIQNYEN) are lumenal. Residues 1067-1087 (TTVFFISSFQYLTVAVAFSKG) traverse the membrane as a helical segment. The Cytoplasmic segment spans residues 1088–1098 (KPFRQPCYKNY). Residues 1099–1119 (FFVISVIILYVFILFIMLHPV) form a helical membrane-spanning segment. The Lumenal segment spans residues 1120–1136 (ASVDQVLEIMCVPYQWR). A helical transmembrane segment spans residues 1137–1157 (IYMLIIVLINAFVSITVEESV). The Cytoplasmic segment spans residues 1158-1219 (DRWGKCCLSW…NGSCQIITIA (62 aa)).

This sequence belongs to the cation transport ATPase (P-type) (TC 3.A.3) family. Type V subfamily. In terms of tissue distribution, expression is greatest in liver, followed by kidney, colon, stomach, brain and small intestine. Isoform 1 is highly expressed in the kidney while isoform 2 is highly expressed in the brain.

It localises to the recycling endosome membrane. The protein resides in the early endosome membrane. The protein localises to the late endosome membrane. It catalyses the reaction putrescine(out) + ATP + H2O = putrescine(in) + ADP + phosphate + H(+). In terms of biological role, ATP-driven pump involved in endocytosis-dependent polyamine transport. Uses ATP as an energy source to transfer polyamine precursor putrescine from the endosomal compartment to the cytosol. This Mus musculus (Mouse) protein is Polyamine-transporting ATPase 13A3.